The chain runs to 403 residues: Argininosuccinate synthase (403 aa).

10–18 (AYSGGLDTS) contributes to the ATP binding site. An L-citrulline-binding site is contributed by Tyr87. Gly117 contributes to the ATP binding site. 3 residues coordinate L-aspartate: Thr119, Asn123, and Asp124. L-citrulline is bound at residue Asn123. Arg127, Ser175, Ser184, Glu260, and Tyr272 together coordinate L-citrulline.

It belongs to the argininosuccinate synthase family. Type 1 subfamily. As to quaternary structure, homotetramer.

It localises to the cytoplasm. The catalysed reaction is L-citrulline + L-aspartate + ATP = 2-(N(omega)-L-arginino)succinate + AMP + diphosphate + H(+). Its pathway is amino-acid biosynthesis; L-arginine biosynthesis; L-arginine from L-ornithine and carbamoyl phosphate: step 2/3. The polypeptide is Argininosuccinate synthase (Bacillus licheniformis (strain ATCC 14580 / DSM 13 / JCM 2505 / CCUG 7422 / NBRC 12200 / NCIMB 9375 / NCTC 10341 / NRRL NRS-1264 / Gibson 46)).